The sequence spans 192 residues: Probable GTP-binding protein EngB (192 aa).

Residues 22 to 192 form the EngB-type G domain; the sequence is NLPQIVIVGR…QVLSIFEKYA (171 aa). GTP contacts are provided by residues 30–37, 57–61, 75–78, 142–145, and 173–175; these read GRSNVGKS, GKTRG, DLPG, TKAD, and FSA. Residues serine 37 and threonine 59 each contribute to the Mg(2+) site.

The protein belongs to the TRAFAC class TrmE-Era-EngA-EngB-Septin-like GTPase superfamily. EngB GTPase family. Mg(2+) serves as cofactor.

In terms of biological role, necessary for normal cell division and for the maintenance of normal septation. This chain is Probable GTP-binding protein EngB, found in Thermoanaerobacter pseudethanolicus (strain ATCC 33223 / 39E) (Clostridium thermohydrosulfuricum).